Here is a 460-residue protein sequence, read N- to C-terminus: Zinc transporter 6 (460 aa).

Residues 1-33 (MGTIHLFRKPQRSFFGKLLQEFRLVAADRRSWK) are Cytoplasmic-facing. Residues 34 to 54 (ILLFGAINVLCTGFLLMWCSS) traverse the membrane as a helical segment. Residues 55-64 (TNSIALTAYT) lie on the Extracellular side of the membrane. A helical membrane pass occupies residues 65–85 (YLTIFDLFSLITCLISYWVMM). At 86-98 (RKPSPVYSFGFER) the chain is on the cytoplasmic side. The helical transmembrane segment at 99 to 119 (LEVLAVFASTVLAQLGALFIL) threads the bilayer. Topologically, residues 120 to 134 (KESAERFLEQPEIHT) are extracellular. A helical transmembrane segment spans residues 135 to 155 (GRLLVGTFVALSFNLFTMLSI). Residues 156–200 (RNKPFAYVSEAASTSWLQEHVADLSRSLCGLIPGLSSIFLPRMNP) are Cytoplasmic-facing. Residues 201 to 221 (FVLIDLAGAFALCITYMLIEI) form a helical membrane-spanning segment. The Extracellular segment spans residues 222–223 (NN). A helical transmembrane segment spans residues 224–244 (YFAVDTASAIAIALMTFGTMY). Residues 245–460 (PMSVYSGKVL…GINRMGQPRP (216 aa)) are Cytoplasmic-facing. The tract at residues 371-390 (TPVTSTPAKPSSPPPEFSFN) is disordered.

This sequence belongs to the cation diffusion facilitator (CDF) transporter (TC 2.A.4) family. SLC30A subfamily. Heterodimer with SLC30A5; form a functional zinc ion transmembrane transporter. As to expression, expressed in brain and liver, and to a lower extent also in lung. Highly expressed in brain (at protein level).

The protein resides in the golgi apparatus. The protein localises to the trans-Golgi network membrane. Functionally, has probably no intrinsic transporter activity but together with SLC30A5 forms a functional zinc ion:proton antiporter heterodimer, mediating zinc entry into the lumen of organelles along the secretory pathway. As part of that zinc ion:proton antiporter, contributes to zinc ion homeostasis within the early secretory pathway and regulates the activation and folding of enzymes like alkaline phosphatases and enzymes involved in phosphatidylinositol glycan anchor biosynthesis. The protein is Zinc transporter 6 (Slc30a6) of Mus musculus (Mouse).